The following is a 427-amino-acid chain: Glutamate-1-semialdehyde 2,1-aminomutase (427 aa).

Lysine 265 bears the N6-(pyridoxal phosphate)lysine mark.

It belongs to the class-III pyridoxal-phosphate-dependent aminotransferase family. HemL subfamily. Homodimer. Pyridoxal 5'-phosphate is required as a cofactor.

The protein resides in the cytoplasm. The enzyme catalyses (S)-4-amino-5-oxopentanoate = 5-aminolevulinate. It participates in porphyrin-containing compound metabolism; protoporphyrin-IX biosynthesis; 5-aminolevulinate from L-glutamyl-tRNA(Glu): step 2/2. The polypeptide is Glutamate-1-semialdehyde 2,1-aminomutase (Burkholderia multivorans (strain ATCC 17616 / 249)).